We begin with the raw amino-acid sequence, 351 residues long: Anthranilate phosphoribosyltransferase (351 aa).

5-phospho-alpha-D-ribose 1-diphosphate contacts are provided by residues Gly-80, 83–84 (GD), Thr-88, 90–93 (NIST), 108–116 (KHGNRSITS), and Ser-120. Anthranilate is bound at residue Gly-80. Residue Ser-92 participates in Mg(2+) binding. Asn-111 serves as a coordination point for anthranilate. An anthranilate-binding site is contributed by Arg-166. 2 residues coordinate Mg(2+): Asp-229 and Glu-230.

Belongs to the anthranilate phosphoribosyltransferase family. Homodimer. Mg(2+) is required as a cofactor.

The enzyme catalyses N-(5-phospho-beta-D-ribosyl)anthranilate + diphosphate = 5-phospho-alpha-D-ribose 1-diphosphate + anthranilate. It participates in amino-acid biosynthesis; L-tryptophan biosynthesis; L-tryptophan from chorismate: step 2/5. Functionally, catalyzes the transfer of the phosphoribosyl group of 5-phosphorylribose-1-pyrophosphate (PRPP) to anthranilate to yield N-(5'-phosphoribosyl)-anthranilate (PRA). In Chlorobaculum tepidum (strain ATCC 49652 / DSM 12025 / NBRC 103806 / TLS) (Chlorobium tepidum), this protein is Anthranilate phosphoribosyltransferase.